The following is a 321-amino-acid chain: Nucleotide-binding protein LI0459 (321 aa).

Residue 41 to 48 coordinates ATP; it reads GMSGAGKS.

It belongs to the RapZ-like family.

Displays ATPase and GTPase activities. The sequence is that of Nucleotide-binding protein LI0459 from Lawsonia intracellularis (strain PHE/MN1-00).